The following is a 772-amino-acid chain: Phosphatidylinositol 4-phosphate 5-kinase 5 (772 aa).

The interval Ala-22 to Arg-56 is disordered. A compositionally biased stretch (acidic residues) spans Thr-43–Thr-52. MORN repeat units follow at residues Tyr-75 to Met-97, Tyr-98 to Thr-120, Tyr-121 to Ala-143, Tyr-144 to Ala-166, Tyr-167 to Tyr-189, Tyr-190 to Arg-212, Tyr-213 to Phe-235, and Tyr-236 to Glu-257. The PIPK domain maps to Ser-377–Phe-768. Positions Ser-646 to Arg-665 are disordered. Positions Tyr-728 to Ser-749 are activation loop.

The catalysed reaction is a 1,2-diacyl-sn-glycero-3-phospho-(1D-myo-inositol 4-phosphate) + ATP = a 1,2-diacyl-sn-glycero-3-phospho-(1D-myo-inositol-4,5-bisphosphate) + ADP + H(+). The sequence is that of Phosphatidylinositol 4-phosphate 5-kinase 5 (PIP5K5) from Arabidopsis thaliana (Mouse-ear cress).